A 61-amino-acid polypeptide reads, in one-letter code: Large ribosomal subunit protein bL32 (61 aa).

Positions 1 to 16 (MAVPKRKTSPSKRGMR) are enriched in basic residues. Positions 1-39 (MAVPKRKTSPSKRGMRRSADALKAPTYIEDKNSGELRRP) are disordered. Residues 28 to 39 (IEDKNSGELRRP) are compositionally biased toward basic and acidic residues.

This sequence belongs to the bacterial ribosomal protein bL32 family.

The polypeptide is Large ribosomal subunit protein bL32 (Rhizobium meliloti (strain 1021) (Ensifer meliloti)).